The chain runs to 65 residues: Large ribosomal subunit protein eL24 (65 aa).

Zn(2+) is bound by residues cysteine 6, cysteine 9, cysteine 32, and cysteine 36. Residues 6–36 (CAFCGADIPPGYGIMYVKSDGTVLRYCSRKC) form a C4-type zinc finger.

This sequence belongs to the eukaryotic ribosomal protein eL24 family. Part of the 50S ribosomal subunit. Forms a cluster with proteins L3 and L14. Requires Zn(2+) as cofactor.

Functionally, binds to the 23S rRNA. The chain is Large ribosomal subunit protein eL24 from Pyrobaculum arsenaticum (strain DSM 13514 / JCM 11321 / PZ6).